The primary structure comprises 968 residues: MAKVMRLIIFVCVALVAISVPAASSVQSQQERIRPGFRQQLPSSIRPFSAFRRRGQEASDSVVYLNIVYLRLVGTRQCATGELTVVVHGKALNNATLGDVQTSLTRTFASSLKEPSSTLAIRRWSWKDPLFLMLTLNRRAVRTGTGLPRSTPLYQVAKQRLFVFVRKPTPTSSCRRAALDPRPLYGVPKVGVQDKYTLHVSMDVLGMSLREPLEHQEEEPGPASVSTYAAAQAILDGASSFGIGAFGSAKPNLKQISMYASGAELEKQVYTPTTSQLALFLPSKTFFGVEVTSVSDGTFRIPVSASRLVPFSAMSYMCTGSQTHKLTQTGMNVLEKRVHGKENPPSEGAEVLLNLLAARKPVNGVFEQDPTVVLLQLWRTPEGSESWQETPLMWEFPDTLEAIEDAGEYRSGILSSIAANTRIIGKMAGWLASRSFSRRFIRTLIRLNNIDLEEAFSMSDKDRRHSAADFRSVQEFFTRPINYHVYRDMDPRASIMAPADSLIQNIYTIRPDFKGEISHPIIPQVKSTSFNLREFLYGARQVPPLQLQSPSNRLFVSILYLAPSDYHRVHSPADWRVTSQTYIPGCTPSVSRRNLEAGDLLHRYERTALIGHWDPEKNGQQLFFSVTMVAAMFVGGLRLSWEEEPLGASMRLGRCTRYTESYEKQVDVELCASQEIGAFRFGSTVVMIFEAPEDFDMTSVGQCSHVAAGQPAGYLGQGRERPLQERCNAFRGNFESPFHFWKHLQKTSSVDDILKQNTLAPRAWRQEPGRVWAEVLRATERGLLYGFALSHYLLKRWATENGNLGELVLGQPEVLRQNINGSDSVIREGFRCFAAKDKKQIRLQMSGRQSQVSLTATVTPDEQFLFQHPFYGCVGDEKLGKLVRGIDATWILLPERAVLLTLKVSTGSKQEDGRVLRVATTKIEVQTEPCQGGWEESRVGTTSTTCAIRTVEKREESISEGVLTNGDL.

A signal peptide spans 1-25; that stretch reads MAKVMRLIIFVCVALVAISVPAASS. Active-site charge relay system; for autoendoproteolytic cleavage activity residues include Asp500, His570, and Ser683. The active-site Schiff-base intermediate with substrate; via pyruvic acid; for decarboxylase activity is Ser683. Position 683 is a pyruvic acid (Ser); by autocatalysis (Ser683).

It belongs to the phosphatidylserine decarboxylase family. In terms of assembly, heterodimer of a large membrane-associated beta subunit and a small pyruvoyl-containing alpha subunit. Pyruvate serves as cofactor. In terms of processing, is synthesized initially as an inactive proenzyme. Formation of the active enzyme involves a self-maturation process in which the active site pyruvoyl group is generated from an internal serine residue via an autocatalytic post-translational modification. Two non-identical subunits are generated from the proenzyme in this reaction, and the pyruvate is formed at the N-terminus of the alpha chain, which is derived from the carboxyl end of the proenzyme. The autoendoproteolytic cleavage occurs by a canonical serine protease mechanism, in which the side chain hydroxyl group of the serine supplies its oxygen atom to form the C-terminus of the beta chain, while the remainder of the serine residue undergoes an oxidative deamination to produce ammonia and the pyruvoyl prosthetic group on the alpha chain. During this reaction, the Ser that is part of the protease active site of the proenzyme becomes the pyruvoyl prosthetic group, which constitutes an essential element of the active site of the mature decarboxylase.

It is found in the parasitophorous vacuole. The protein resides in the cytoplasmic vesicle. It localises to the secretory vesicle. The enzyme catalyses a 1,2-diacyl-sn-glycero-3-phospho-L-serine + H(+) = a 1,2-diacyl-sn-glycero-3-phosphoethanolamine + CO2. The protein operates within phospholipid metabolism; phosphatidylethanolamine biosynthesis; phosphatidylethanolamine from CDP-diacylglycerol: step 2/2. Catalyzes the formation of phosphatidylethanolamine (PtdEtn) from phosphatidylserine (PtdSer). Plays a central role in phospholipid metabolism and in the interorganelle trafficking of phosphatidylserine. Can act on liposomal and host cell PtdSer. In Toxoplasma gondii (strain ATCC 50853 / GT1), this protein is Phosphatidylserine decarboxylase 2 proenzyme.